A 789-amino-acid polypeptide reads, in one-letter code: Zinc finger FYVE domain-containing protein 1 (789 aa).

Residues 416–788 (MAHSSFFPDE…LSVMTGKGPL (373 aa)) are required for localization in the lipid droplets. 2 consecutive FYVE-type zinc fingers follow at residues 598–659 (NSQI…EARN) and 715–775 (DHEI…KKPA). Zn(2+)-binding residues include C604, C607, C620, C623, C628, C631, C651, C654, C721, C724, C737, C740, C745, C748, C767, and C770.

In terms of assembly, interacts with RAB18 (in GTP-bound form). Interacts with BSCL2 in a RAB18-dependent manner. Interacts with ZW10.

The protein localises to the golgi apparatus. It is found in the golgi stack. It localises to the endoplasmic reticulum. The protein resides in the preautophagosomal structure. Its subcellular location is the lipid droplet. The protein localises to the mitochondrion. Its function is as follows. Plays a role in the formation of lipid droplets (LDs) which are storage organelles at the center of lipid and energy homeostasis. Regulates the morphology, size and distribution of LDs. Mediates the formation of endoplasmic reticulum-lipid droplets (ER-LD) contact sites by forming a complex with RAB18 and ZW10. Binds to phosphatidylinositol 3-phosphate (PtdIns3P) through FYVE-type zinc finger. The polypeptide is Zinc finger FYVE domain-containing protein 1 (ZFYVE1) (Pongo abelii (Sumatran orangutan)).